Reading from the N-terminus, the 75-residue chain is Small ribosomal subunit protein bS18 (75 aa).

It belongs to the bacterial ribosomal protein bS18 family. Part of the 30S ribosomal subunit. Forms a tight heterodimer with protein bS6.

Its function is as follows. Binds as a heterodimer with protein bS6 to the central domain of the 16S rRNA, where it helps stabilize the platform of the 30S subunit. The sequence is that of Small ribosomal subunit protein bS18 from Ruegeria sp. (strain TM1040) (Silicibacter sp.).